The chain runs to 678 residues: UvrABC system protein B (678 aa).

Residues glutamate 26–aspartate 185 enclose the Helicase ATP-binding domain. Position 39–46 (glycine 39–threonine 46) interacts with ATP. The Beta-hairpin signature appears at tyrosine 92–valine 115. Residues glutamine 430–leucine 596 enclose the Helicase C-terminal domain. The disordered stretch occupies residues glutamate 597 to threonine 630. The 36-residue stretch at alanine 635–serine 670 folds into the UVR domain.

Belongs to the UvrB family. As to quaternary structure, forms a heterotetramer with UvrA during the search for lesions. Interacts with UvrC in an incision complex.

The protein resides in the cytoplasm. The UvrABC repair system catalyzes the recognition and processing of DNA lesions. A damage recognition complex composed of 2 UvrA and 2 UvrB subunits scans DNA for abnormalities. Upon binding of the UvrA(2)B(2) complex to a putative damaged site, the DNA wraps around one UvrB monomer. DNA wrap is dependent on ATP binding by UvrB and probably causes local melting of the DNA helix, facilitating insertion of UvrB beta-hairpin between the DNA strands. Then UvrB probes one DNA strand for the presence of a lesion. If a lesion is found the UvrA subunits dissociate and the UvrB-DNA preincision complex is formed. This complex is subsequently bound by UvrC and the second UvrB is released. If no lesion is found, the DNA wraps around the other UvrB subunit that will check the other stand for damage. The chain is UvrABC system protein B from Hydrogenovibrio crunogenus (strain DSM 25203 / XCL-2) (Thiomicrospira crunogena).